The following is a 153-amino-acid chain: Small ribosomal subunit protein uS13 (153 aa).

Residues 132–153 (VRGQRTRSHHRKGRTVGVIKKK) form a disordered region. Over residues 135 to 153 (QRTRSHHRKGRTVGVIKKK) the composition is skewed to basic residues.

The protein belongs to the universal ribosomal protein uS13 family. As to quaternary structure, part of the 30S ribosomal subunit. Forms a loose heterodimer with protein S19. Forms two bridges to the 50S subunit in the 70S ribosome.

Located at the top of the head of the 30S subunit, it contacts several helices of the 16S rRNA. In the 70S ribosome it contacts the 23S rRNA (bridge B1a) and protein L5 of the 50S subunit (bridge B1b), connecting the 2 subunits; these bridges are implicated in subunit movement. The sequence is that of Small ribosomal subunit protein uS13 from Nanoarchaeum equitans (strain Kin4-M).